The sequence spans 204 residues: General stress protein Ctc (204 aa).

Positions 177 to 204 (ILPPQQQEAAEVDEEESADAQPEGENEQ) are disordered. Acidic residues predominate over residues 186 to 204 (AEVDEEESADAQPEGENEQ).

Belongs to the bacterial ribosomal protein bL25 family. CTC subfamily. Part of the ribosome (presumably the 50S subunit) under heat-stress but not control growth conditions. Binds 5S rRNA.

Functionally, not required for exponential growth; probably functions in vegetatively growing cells, maybe required for accurate translation under stress conditions. In Bacillus subtilis (strain 168), this protein is General stress protein Ctc.